The following is a 37-amino-acid chain: ATP synthase subunit O, mitochondrial (37 aa).

Belongs to the ATPase delta chain family. As to quaternary structure, F-type ATPases have 2 components, CF(1) - the catalytic core - and CF(0) - the membrane proton channel. CF(1) has five subunits: alpha(3), beta(3), gamma(1), delta(1), epsilon(1). CF(0) has three main subunits: a, b and c.

It is found in the mitochondrion. It localises to the mitochondrion inner membrane. Its function is as follows. Mitochondrial membrane ATP synthase (F(1)F(0) ATP synthase or Complex V) produces ATP from ADP in the presence of a proton gradient across the membrane which is generated by electron transport complexes of the respiratory chain. F-type ATPases consist of two structural domains, F(1) - containing the extramembraneous catalytic core and F(0) - containing the membrane proton channel, linked together by a central stalk and a peripheral stalk. During catalysis, ATP synthesis in the catalytic domain of F(1) is coupled via a rotary mechanism of the central stalk subunits to proton translocation. Part of the complex F(0) domain and the peripheric stalk, which acts as a stator to hold the catalytic alpha(3)beta(3) subcomplex and subunit a/ATP6 static relative to the rotary elements. This is ATP synthase subunit O, mitochondrial from Solanum tuberosum (Potato).